The primary structure comprises 559 residues: Dihydroxy-acid dehydratase (559 aa).

Asp80 is a binding site for Mg(2+). Cys121 contacts [2Fe-2S] cluster. Mg(2+) contacts are provided by Asp122 and Lys123. Lys123 bears the N6-carboxylysine mark. Position 194 (Cys194) interacts with [2Fe-2S] cluster. Glu447 is a Mg(2+) binding site. Ser473 acts as the Proton acceptor in catalysis.

Belongs to the IlvD/Edd family. Homodimer. [2Fe-2S] cluster is required as a cofactor. It depends on Mg(2+) as a cofactor.

It catalyses the reaction (2R)-2,3-dihydroxy-3-methylbutanoate = 3-methyl-2-oxobutanoate + H2O. The enzyme catalyses (2R,3R)-2,3-dihydroxy-3-methylpentanoate = (S)-3-methyl-2-oxopentanoate + H2O. It functions in the pathway amino-acid biosynthesis; L-isoleucine biosynthesis; L-isoleucine from 2-oxobutanoate: step 3/4. The protein operates within amino-acid biosynthesis; L-valine biosynthesis; L-valine from pyruvate: step 3/4. Functionally, functions in the biosynthesis of branched-chain amino acids. Catalyzes the dehydration of (2R,3R)-2,3-dihydroxy-3-methylpentanoate (2,3-dihydroxy-3-methylvalerate) into 2-oxo-3-methylpentanoate (2-oxo-3-methylvalerate) and of (2R)-2,3-dihydroxy-3-methylbutanoate (2,3-dihydroxyisovalerate) into 2-oxo-3-methylbutanoate (2-oxoisovalerate), the penultimate precursor to L-isoleucine and L-valine, respectively. The chain is Dihydroxy-acid dehydratase from Chlorobium chlorochromatii (strain CaD3).